The chain runs to 929 residues: LPS-assembly protein LptD (929 aa).

The N-terminal stretch at 1–24 (MKLRFIRSAGWLFLLFCLACNARA) is a signal peptide. The interval 26–208 (LPPLSSKPEQ…EAGDEKLRLA (183 aa)) is disordered. Over residues 44–74 (GDDKPVVIDTERIRGHHEYESGTRSESELRS) the composition is skewed to basic and acidic residues. Polar residues predominate over residues 154–164 (RTQSAPRTLSA). A compositionally biased stretch (basic and acidic residues) spans 181 to 208 (DQDRPGFAEGERIGGHREEAGDEKLRLA).

The protein belongs to the LptD family. As to quaternary structure, component of the lipopolysaccharide transport and assembly complex. Interacts with LptE and LptA.

Its subcellular location is the cell outer membrane. In terms of biological role, together with LptE, is involved in the assembly of lipopolysaccharide (LPS) at the surface of the outer membrane. The protein is LPS-assembly protein LptD of Nitrosospira multiformis (strain ATCC 25196 / NCIMB 11849 / C 71).